A 47-amino-acid chain; its full sequence is Mu-theraphotoxin-An1a (47 aa).

Intrachain disulfides connect Cys4–Cys34, Cys8–Cys39, and Cys22–Cys44.

Contains 3 disulfide bonds. As to expression, expressed by the venom gland.

The protein localises to the secreted. Is toxic to insects. Reduces amplitude and frequency of spontaneous firing and inhibits voltage-gated sodium current (Nav) in the dorsal unpaired median (DUM) neurons of P.americana. This Acanthoscurria natalensis (Tarantula spider) protein is Mu-theraphotoxin-An1a.